The chain runs to 1245 residues: Trafficking protein particle complex II-specific subunit 130 homolog (1245 aa).

2 disordered regions span residues 488 to 524 (GDGSGLDANSKPSPNKSASNYMARTMSGPATSETSLP) and 884 to 903 (HVGGTDASKTSSSSTDTRKV). 2 stretches are compositionally biased toward low complexity: residues 495 to 507 (ANSKPSPNKSASN) and 888 to 898 (TDASKTSSSST).

This sequence belongs to the TMEM1 family. Part of the multisubunit TRAPP (transport protein particle) II complex composed of BET3, BET5, TRS20, TRS23, TRS31, TRS33, TRS65, TRS85, TRS120 and TRS130.

It localises to the golgi apparatus. The protein resides in the trans-Golgi network. The protein localises to the early endosome. In terms of biological role, specific subunit of the TRAPP II complex, a highly conserved vesicle tethering complex that is required for the proper transport of proteins in post-Golgi trafficking pathways to the growing cell plate in mitotic active cells. The polypeptide is Trafficking protein particle complex II-specific subunit 130 homolog (Oryza sativa subsp. japonica (Rice)).